A 164-amino-acid chain; its full sequence is FMN reductase (NADH) RutF (164 aa).

Belongs to the non-flavoprotein flavin reductase family. RutF subfamily.

The catalysed reaction is FMNH2 + NAD(+) = FMN + NADH + 2 H(+). Its function is as follows. Catalyzes the reduction of FMN to FMNH2 which is used to reduce pyrimidine by RutA via the Rut pathway. The sequence is that of FMN reductase (NADH) RutF from Escherichia coli (strain K12 / MC4100 / BW2952).